We begin with the raw amino-acid sequence, 177 residues long: SAYSvFN domain-containing protein 1 (177 aa).

Residues 1–100 (MADFQEQLRQ…CLKYTLWTVY (100 aa)) are Cytoplasmic-facing. The span at 57–70 (SENSQDEAVTSSES) shows a compositional bias: polar residues. The tract at residues 57–85 (SENSQDEAVTSSESELVPEEQPTRSTDHH) is disordered. Residues 101 to 121 (LLFWITLYVIAIKLSFGLVFL) constitute an intramembrane region (helical). The Cytoplasmic segment spans residues 122–177 (MFSALFGIYFNTRTEPKKRNEMSAYSVFNKNCESIDGTLKAEQFEREIRYGSGSVR).

This sequence belongs to the SAYSD1 family.

The protein localises to the endoplasmic reticulum membrane. Functionally, ufmylation 'reader' component of a translocation-associated quality control pathway, a mechanism that takes place when a ribosome has stalled during translation, and which is required to degrade clogged substrates. Specifically recognizes and binds ufmylated ribosomes when a ribosome has stalled, promoting the transport of stalled nascent chain to lysosomes for degradation. This chain is SAYSvFN domain-containing protein 1, found in Drosophila melanogaster (Fruit fly).